The primary structure comprises 151 residues: Flagellar assembly factor FliW 2 (151 aa).

This sequence belongs to the FliW family. As to quaternary structure, interacts with translational regulator CsrA and flagellin(s).

The protein localises to the cytoplasm. Acts as an anti-CsrA protein, binds CsrA and prevents it from repressing translation of its target genes, one of which is flagellin. Binds to flagellin and participates in the assembly of the flagellum. This Desulfotalea psychrophila (strain LSv54 / DSM 12343) protein is Flagellar assembly factor FliW 2.